The sequence spans 271 residues: Proteasome inhibitor PI31 subunit (271 aa).

N-acetylalanine is present on A2. The tract at residues 2–150 is important for homodimerization and interaction with FBXO7; it reads AGLEVLFASA…PIHEQWEKVR (149 aa). 2 positions are modified to phosphoserine: S153 and S189. R205 bears the Omega-N-methylarginine mark. R219 is modified (asymmetric dimethylarginine). The interval 221 to 271 is disordered; that stretch reads LIDPSSGLPNRLPPGAVPPGARFDPFGPIGTSPSGPNPDHLPPPGYDDMYL. R231 is modified (omega-N-methylarginine). Residue S252 is modified to Phosphoserine. A compositionally biased stretch (pro residues) spans 255–265; sequence GPNPDHLPPPG.

This sequence belongs to the proteasome inhibitor PI31 family. As to quaternary structure, monomer and homodimer. Interacts with FBXO7.

It is found in the cytoplasm. Its subcellular location is the endoplasmic reticulum. Functionally, plays an important role in control of proteasome function. Inhibits the hydrolysis of protein and peptide substrates by the 20S proteasome. Also inhibits the activation of the proteasome by the proteasome regulatory proteins PA700 and PA28. This chain is Proteasome inhibitor PI31 subunit (Psmf1), found in Rattus norvegicus (Rat).